Consider the following 452-residue polypeptide: Phosphoglucosamine mutase (452 aa).

The Phosphoserine intermediate role is filled by Ser-97. 4 residues coordinate Mg(2+): Ser-97, Asp-236, Asp-238, and Asp-240. Phosphoserine is present on Ser-97.

Belongs to the phosphohexose mutase family. Mg(2+) is required as a cofactor. Post-translationally, activated by phosphorylation.

It carries out the reaction alpha-D-glucosamine 1-phosphate = D-glucosamine 6-phosphate. Its function is as follows. Catalyzes the conversion of glucosamine-6-phosphate to glucosamine-1-phosphate. The chain is Phosphoglucosamine mutase from Prochlorococcus marinus (strain MIT 9515).